A 48-amino-acid polypeptide reads, in one-letter code: Delta-stichotoxin-Hcr1a (48 aa).

3 disulfide bridges follow: cysteine 3/cysteine 43, cysteine 5/cysteine 33, and cysteine 26/cysteine 44. Lysine 48 carries the lysine amide; partial; in Delta-stichotoxin-Hcr1f modification.

Belongs to the sea anemone sodium channel inhibitory toxin family. Type II subfamily. As to quaternary structure, probably composed of two peptide chains of 12 and 35 residues connected by two disulfide bonds (Cys-3-Cys-43 and Cys-5-Cys-33). Post-translationally, delta-SHTX-Hcr1f (RTX-VI) may be the result of post-translational modification of delta-SHTX-Hcr1a (RTX-III), which would consist of Arg-13 cleavage.

It localises to the secreted. The protein localises to the nematocyst. Binds to site 3 of voltage-gated sodium channels and inhibits the inactivation process. Specifically inhibits mammalian Nav1.3/SCN3A and Nav1.6/SCN8A sodium channels, as well as insect BgNav1 and VdNav1 sodium channels. Functionally, binds to site 3 of voltage-gated sodium channels and inhibits the inactivation process. Specifically inhibits mammalian Nav1.2/SCN3A (low inhibition) and Nav1.6/SCN8A sodium channels, as well as insect BgNav1 and VdNav1 sodium channels. The protein is Delta-stichotoxin-Hcr1a of Radianthus crispa (Leathery sea anemone).